A 258-amino-acid polypeptide reads, in one-letter code: UPF0758 protein BamMC406_2419 (258 aa).

The tract at residues 13–42 is disordered; the sequence is CRDPADAPAAPARHTGPARPRKRRPRNWKP. Residues 31–42 are compositionally biased toward basic residues; the sequence is RPRKRRPRNWKP. In terms of domain architecture, MPN spans 136–258; sequence QIDSPGAVED…TFSFARAGWL (123 aa). Zn(2+) contacts are provided by His-207, His-209, and Asp-220. Residues 207–220 carry the JAMM motif motif; sequence HNHPSGAVQPSAED.

The protein belongs to the UPF0758 family.

This Burkholderia ambifaria (strain MC40-6) protein is UPF0758 protein BamMC406_2419.